The primary structure comprises 418 residues: Aminodeoxyfutalosine deaminase (418 aa).

Zn(2+) contacts are provided by histidine 97 and histidine 99. 2 residues coordinate substrate: glutamate 173 and histidine 211. Histidine 238 serves as a coordination point for Zn(2+). The Proton donor role is filled by glutamate 241. Residue aspartate 352 coordinates Zn(2+).

This sequence belongs to the metallo-dependent hydrolases superfamily. Zn(2+) serves as cofactor.

The catalysed reaction is 6-amino-6-deoxyfutalosine + H2O + H(+) = futalosine + NH4(+). Its pathway is quinol/quinone metabolism; menaquinone biosynthesis. Its function is as follows. Catalyzes the deamination of aminodeoxyfutalosine (AFL) into futalosine (FL). To a lesser extent, can also deaminate 5'-deoxyadenosine, 5'-methylthioadenosine, 2'-deoxyadenosine, adenosine, 1-(6-amino-9H-purin-9-yl)-1-deoxy-N-ethyl-beta-D-ribofuranuronamide (NECA), and S-adenosylhomocysteine. This is Aminodeoxyfutalosine deaminase from Deinococcus radiodurans (strain ATCC 13939 / DSM 20539 / JCM 16871 / CCUG 27074 / LMG 4051 / NBRC 15346 / NCIMB 9279 / VKM B-1422 / R1).